The chain runs to 232 residues: Transcriptional regulatory protein CpxR (232 aa).

The Response regulatory domain maps to 3 to 115 (KILLVDDDRE…ELVARIRAIL (113 aa)). D51 carries the post-translational modification 4-aspartylphosphate. Positions 131–230 (SPTLEVDALS…LRGRGYLMVS (100 aa)) form a DNA-binding region, ompR/PhoB-type.

In terms of assembly, interacts with cognate sensor kinase CpxA. In terms of processing, phosphorylated by CpxA.

Its subcellular location is the cytoplasm. The two-component system is activated by envelope stress such as overexpression of some (misfolded) periplasmic proteins. In terms of biological role, response regulator member of the two-component regulatory system CpxA/CpxR which responds to envelope stress response by activating or, in some cases, repressing expression of downstream genes. Binds to the promoter regions of various genes in vitro, including ompC, cpxP, ryhB and mrkA and, when CpxR is phosphorylated, pecO. Represses expression of the major pilin of type 3 fimbriae MrkA as well as that of type 1 fimbriae FimA. Repression of expression of MrkA appears to be indirect, mediated by activation of the iron homeostasis regulator RyhB. This is Transcriptional regulatory protein CpxR from Klebsiella pneumoniae subsp. pneumoniae (strain HS11286).